A 247-amino-acid polypeptide reads, in one-letter code: DNA polymerase sliding clamp (247 aa).

It belongs to the PCNA family. Homotrimer. The subunits circularize to form a toroid; DNA passes through its center. Replication factor C (RFC) is required to load the toroid on the DNA.

Its function is as follows. Sliding clamp subunit that acts as a moving platform for DNA processing. Responsible for tethering the catalytic subunit of DNA polymerase and other proteins to DNA during high-speed replication. This chain is DNA polymerase sliding clamp, found in Methanoculleus marisnigri (strain ATCC 35101 / DSM 1498 / JR1).